A 368-amino-acid polypeptide reads, in one-letter code: DNA integrity scanning protein DisA (368 aa).

The 139-residue stretch at 15-153 folds into the DAC domain; sequence DERLRATLAA…DGRRHVLDEP (139 aa). ATP is bound by residues G82, L100, and 113–117; that span reads TRHRS. The tract at residues 101-121 is disordered; sequence QPDPSIPTNESGTRHRSAERT. Positions 112 to 121 are enriched in basic and acidic residues; sequence GTRHRSAERT.

It belongs to the DisA family. As to quaternary structure, homooctamer. Requires Mg(2+) as cofactor.

The enzyme catalyses 2 ATP = 3',3'-c-di-AMP + 2 diphosphate. Its function is as follows. Participates in a DNA-damage check-point. DisA forms globular foci that rapidly scan along the chromosomes searching for lesions. Functionally, also has diadenylate cyclase activity, catalyzing the condensation of 2 ATP molecules into cyclic di-AMP (c-di-AMP). c-di-AMP likely acts as a signaling molecule that may couple DNA integrity with a cellular process. The polypeptide is DNA integrity scanning protein DisA (Acidothermus cellulolyticus (strain ATCC 43068 / DSM 8971 / 11B)).